The chain runs to 621 residues: E3 SUMO-protein ligase PIAS2 (621 aa).

Positions 11–45 (VSSFRVSELQVLLGFAGRNKSGRKHDLLMRALHLL) constitute an SAP domain. Residues 19-23 (LQVLL) carry the LXXLL motif motif. Glycyl lysine isopeptide (Lys-Gly) (interchain with G-Cter in SUMO2) cross-links involve residues Lys-46 and Lys-249. The 166-residue stretch at 134 to 299 (QPSPPIPPVH…SMSVYLVRQL (166 aa)) folds into the PINIT domain. An SP-RING-type zinc finger spans residues 331–412 (PDSEIATTSL…FMEILNDCSD (82 aa)). 4 residues coordinate Zn(2+): Cys-362, His-364, Cys-385, and Cys-388. Residues Lys-430, Lys-435, Lys-443, and Lys-452 each participate in a glycyl lysine isopeptide (Lys-Gly) (interchain with G-Cter in SUMO2) cross-link. The segment at 467-473 (VDVIDLT) is SUMO1-binding. Phosphoserine occurs at positions 476, 477, and 478. The Nuclear localization signal motif lies at 484-492 (PPAKRKCIF). Lys-489 is covalently cross-linked (Glycyl lysine isopeptide (Lys-Gly) (interchain with G-Cter in SUMO2)). Residue Ser-499 is modified to Phosphoserine. Glycyl lysine isopeptide (Lys-Gly) (interchain with G-Cter in SUMO2) cross-links involve residues Lys-502 and Gln-562. Low complexity predominate over residues 579–610 (SSTSVTTTSSHESSTHVSSSSSRSETGVITSS). The interval 579–621 (SSTSVTTTSSHESSTHVSSSSSRSETGVITSSGSNIPDIISLD) is disordered.

This sequence belongs to the PIAS family. As to quaternary structure, binds SUMO1 and UBE2I. Interacts with AXIN1, JUN, MDM2, PARK7, TP53 and TP73 isoform alpha, but not TP73 isoform beta. Interacts with STAT4 following IL12 and IFN-alpha stimulation of T-cells. Interacts also with GTF2I, GTF2IRD1, IKFZ1, DAB2 and MSX2, as well as with several steroid receptors, including ESR1, ESR2, NR3C1, PGR, AR, and with NCOA2. Sumoylation of a target protein seems to enhance the interaction. Binds to sumoylated ELK1. Binds DNA, such as CDKN1A promoter, in a sequence-specific manner. Interacts with PLAG1. Interacts with KLF8; the interaction results in SUMO ligation and repression of KLF8 transcriptional activity and of its cell cycle progression into G(1) phase. PIAS2-beta interacts with IFIH1/MDA5. Isoform PIAS2-alpha interacts with PML (isoform PML-12). Interacts with PRDM1/Blimp-1. Post-translationally, sumoylated. Mainly expressed in testis. Isoform 3 is expressed predominantly in adult testis, weakly in pancreas, embryonic testis and sperm, and at very low levels in other organs.

It localises to the nucleus speckle. The protein localises to the nucleus. It is found in the PML body. The protein operates within protein modification; protein sumoylation. In terms of biological role, functions as an E3-type small ubiquitin-like modifier (SUMO) ligase, stabilizing the interaction between UBE2I and the substrate, and as a SUMO-tethering factor. Plays a crucial role as a transcriptional coregulator in various cellular pathways, including the STAT pathway, the p53 pathway and the steroid hormone signaling pathway. The effects of this transcriptional coregulation, transactivation or silencing may vary depending upon the biological context and the PIAS2 isoform studied. However, it seems to be mostly involved in gene silencing. Binds to sumoylated ELK1 and enhances its transcriptional activity by preventing recruitment of HDAC2 by ELK1, thus reversing SUMO-mediated repression of ELK1 transactivation activity. Isoform PIAS2-beta, but not isoform PIAS2-alpha, promotes MDM2 sumoylation. Isoform PIAS2-alpha promotes PARK7 sumoylation. Isoform PIAS2-beta promotes NCOA2 sumoylation more efficiently than isoform PIAS2-alpha. Isoform PIAS2-alpha sumoylates PML at'Lys-65' and 'Lys-160'. The protein is E3 SUMO-protein ligase PIAS2 (PIAS2) of Homo sapiens (Human).